The sequence spans 411 residues: Argininosuccinate synthase (411 aa).

Residues 15–23 and A42 each bind ATP; that span reads AYSGGLDTS. L-citrulline is bound by residues Y93 and S98. G123 provides a ligand contact to ATP. L-aspartate is bound by residues T125, N129, and D130. Position 129 (N129) interacts with L-citrulline. L-citrulline contacts are provided by R133, S185, S194, E270, and Y282.

Belongs to the argininosuccinate synthase family. Type 1 subfamily. Homotetramer.

Its subcellular location is the cytoplasm. The enzyme catalyses L-citrulline + L-aspartate + ATP = 2-(N(omega)-L-arginino)succinate + AMP + diphosphate + H(+). It functions in the pathway amino-acid biosynthesis; L-arginine biosynthesis; L-arginine from L-ornithine and carbamoyl phosphate: step 2/3. The polypeptide is Argininosuccinate synthase (Psychrobacter sp. (strain PRwf-1)).